Reading from the N-terminus, the 64-residue chain is Small ribosomal subunit protein bS21 (64 aa).

The segment at 42 to 64 (KKEKEKAAAKKRNKYNKRRSFYY) is disordered. Basic residues predominate over residues 50-64 (AKKRNKYNKRRSFYY).

It belongs to the bacterial ribosomal protein bS21 family.

The chain is Small ribosomal subunit protein bS21 from Malacoplasma penetrans (strain HF-2) (Mycoplasma penetrans).